We begin with the raw amino-acid sequence, 213 residues long: Urease accessory protein UreG (213 aa).

Residue 10–17 (GPVGSGKT) participates in GTP binding.

Belongs to the SIMIBI class G3E GTPase family. UreG subfamily. In terms of assembly, homodimer. UreD, UreF and UreG form a complex that acts as a GTP-hydrolysis-dependent molecular chaperone, activating the urease apoprotein by helping to assemble the nickel containing metallocenter of UreC. The UreE protein probably delivers the nickel.

The protein localises to the cytoplasm. Functionally, facilitates the functional incorporation of the urease nickel metallocenter. This process requires GTP hydrolysis, probably effectuated by UreG. The polypeptide is Urease accessory protein UreG (Deinococcus radiodurans (strain ATCC 13939 / DSM 20539 / JCM 16871 / CCUG 27074 / LMG 4051 / NBRC 15346 / NCIMB 9279 / VKM B-1422 / R1)).